The sequence spans 443 residues: 23S rRNA (uracil(1939)-C(5))-methyltransferase RlmD (443 aa).

In terms of domain architecture, TRAM spans 4–66; it reads QNRFDRTSFQ…RHFDEARVVE (63 aa). Positions 79, 85, 88, and 167 each coordinate [4Fe-4S] cluster. Gln-275, Phe-304, Asn-309, Glu-325, Asp-352, and Asp-373 together coordinate S-adenosyl-L-methionine. Cys-399 functions as the Nucleophile in the catalytic mechanism.

This sequence belongs to the class I-like SAM-binding methyltransferase superfamily. RNA M5U methyltransferase family. RlmD subfamily.

The catalysed reaction is uridine(1939) in 23S rRNA + S-adenosyl-L-methionine = 5-methyluridine(1939) in 23S rRNA + S-adenosyl-L-homocysteine + H(+). Its function is as follows. Catalyzes the formation of 5-methyl-uridine at position 1939 (m5U1939) in 23S rRNA. In Xylella fastidiosa (strain Temecula1 / ATCC 700964), this protein is 23S rRNA (uracil(1939)-C(5))-methyltransferase RlmD.